A 210-amino-acid chain; its full sequence is Cytidylate kinase (210 aa).

Gly-9–Thr-17 provides a ligand contact to ATP.

It belongs to the cytidylate kinase family. Type 1 subfamily.

The protein resides in the cytoplasm. It catalyses the reaction CMP + ATP = CDP + ADP. The catalysed reaction is dCMP + ATP = dCDP + ADP. In Agrobacterium fabrum (strain C58 / ATCC 33970) (Agrobacterium tumefaciens (strain C58)), this protein is Cytidylate kinase.